The primary structure comprises 50 residues: Large ribosomal subunit protein bL33B (50 aa).

Belongs to the bacterial ribosomal protein bL33 family.

The chain is Large ribosomal subunit protein bL33B from Ligilactobacillus salivarius (strain UCC118) (Lactobacillus salivarius).